Here is a 195-residue protein sequence, read N- to C-terminus: Neurensin-1 (195 aa).

2 consecutive transmembrane segments (helical) span residues 66–86 (LISG…GFLV) and 120–140 (AVLF…SVFV).

Belongs to the VMP family. Expressed in brain. Not detectable in other tissues tested.

The protein resides in the membrane. It localises to the cell projection. Its subcellular location is the neuron projection. In terms of biological role, may play an important role in neural organelle transport, and in transduction of nerve signals or in nerve growth. May play a role in neurite extension. May play a role in memory consolidation. This is Neurensin-1 from Homo sapiens (Human).